Consider the following 863-residue polypeptide: Leucine--tRNA ligase (863 aa).

Residues 42–52 carry the 'HIGH' region motif; sequence PYPSGKIHMGH. The short motif at 618 to 622 is the 'KMSKS' region element; sequence KMSKS. ATP is bound at residue Lys621.

It belongs to the class-I aminoacyl-tRNA synthetase family.

It localises to the cytoplasm. It carries out the reaction tRNA(Leu) + L-leucine + ATP = L-leucyl-tRNA(Leu) + AMP + diphosphate. The protein is Leucine--tRNA ligase of Desulforapulum autotrophicum (strain ATCC 43914 / DSM 3382 / VKM B-1955 / HRM2) (Desulfobacterium autotrophicum).